The following is a 255-amino-acid chain: Endonuclease 8 2 (255 aa).

The active-site Schiff-base intermediate with DNA is P2. E3 functions as the Proton donor in the catalytic mechanism. K51 functions as the Proton donor; for beta-elimination activity in the catalytic mechanism. The DNA site is built by Q67 and N164. An FPG-type zinc finger spans residues 221–255 (WVYGRAGQGCRRCGTLIAYDTTDERVRYWCPACQR). The Proton donor; for delta-elimination activity role is filled by R245.

It belongs to the FPG family. The cofactor is Zn(2+).

It carries out the reaction 2'-deoxyribonucleotide-(2'-deoxyribose 5'-phosphate)-2'-deoxyribonucleotide-DNA = a 3'-end 2'-deoxyribonucleotide-(2,3-dehydro-2,3-deoxyribose 5'-phosphate)-DNA + a 5'-end 5'-phospho-2'-deoxyribonucleoside-DNA + H(+). In terms of biological role, involved in base excision repair of DNA damaged by oxidation or by mutagenic agents. Acts as a DNA glycosylase that recognizes and removes damaged bases. Has AP (apurinic/apyrimidinic) lyase activity and introduces nicks in the DNA strand. Cleaves the DNA backbone by beta-delta elimination to generate a single-strand break at the site of the removed base with both 3'- and 5'-phosphates. In Mycobacterium bovis (strain ATCC BAA-935 / AF2122/97), this protein is Endonuclease 8 2 (nei2).